A 2376-amino-acid polypeptide reads, in one-letter code: MAG2-interacting protein 2 (2376 aa).

In terms of assembly, forms a complex with MAG2, ZW10/MIP1 and MIP3 on the endoplasmic reticulum.

The protein resides in the endoplasmic reticulum membrane. In terms of biological role, required for proper maturation of seed storage proteins. Forms a complex with MAG2, ZW10/MIP1 and MIP3 on the endoplasmic reticulum that may be responsible for efficient transport of seed storage proteins. In Arabidopsis thaliana (Mouse-ear cress), this protein is MAG2-interacting protein 2.